Consider the following 121-residue polypeptide: Small ribosomal subunit protein uS13 (121 aa).

The disordered stretch occupies residues 94 to 121 (GLPLRGQRTRTNARTRKGPRRAAQSLKK).

The protein belongs to the universal ribosomal protein uS13 family. In terms of assembly, part of the 30S ribosomal subunit. Forms a loose heterodimer with protein S19. Forms two bridges to the 50S subunit in the 70S ribosome.

Located at the top of the head of the 30S subunit, it contacts several helices of the 16S rRNA. In the 70S ribosome it contacts the 23S rRNA (bridge B1a) and protein L5 of the 50S subunit (bridge B1b), connecting the 2 subunits; these bridges are implicated in subunit movement. Contacts the tRNAs in the A and P-sites. The protein is Small ribosomal subunit protein uS13 of Paraburkholderia phymatum (strain DSM 17167 / CIP 108236 / LMG 21445 / STM815) (Burkholderia phymatum).